A 247-amino-acid polypeptide reads, in one-letter code: GTP cyclohydrolase 1 type 2 homolog (247 aa).

A divalent metal cation contacts are provided by histidine 63, histidine 64, aspartate 101, histidine 215, and glutamate 219.

Belongs to the GTP cyclohydrolase I type 2/NIF3 family. Homohexamer.

This is GTP cyclohydrolase 1 type 2 homolog from Buchnera aphidicola subsp. Baizongia pistaciae (strain Bp).